The sequence spans 241 residues: Small ribosomal subunit protein uS2 (241 aa).

Belongs to the universal ribosomal protein uS2 family.

In Sodalis glossinidius (strain morsitans), this protein is Small ribosomal subunit protein uS2.